Here is a 98-residue protein sequence, read N- to C-terminus: Large ribosomal subunit protein uL23 (98 aa).

Belongs to the universal ribosomal protein uL23 family. Part of the 50S ribosomal subunit. Contacts protein L29, and trigger factor when it is bound to the ribosome.

Its function is as follows. One of the early assembly proteins it binds 23S rRNA. One of the proteins that surrounds the polypeptide exit tunnel on the outside of the ribosome. Forms the main docking site for trigger factor binding to the ribosome. The sequence is that of Large ribosomal subunit protein uL23 from Rickettsia rickettsii (strain Iowa).